Here is a 1064-residue protein sequence, read N- to C-terminus: Fibropellin-1 (1064 aa).

An N-terminal signal peptide occupies residues 1 to 19; that stretch reads MRTWLLAVLLLSVIAVTYG. The region spanning 20–55 is the EGF-like 1 domain; sequence QGECDSDPCENGSTCQEGEGSYICQCPMGYDGQNCD. Disulfide bonds link Cys-23-Cys-34, Cys-28-Cys-43, Cys-45-Cys-54, and Cys-62-Cys-88. Asn-30 carries an N-linked (GlcNAc...) asparagine glycan. In terms of domain architecture, CUB spans 62-175; that stretch reads CGYNVFDANG…NRGFRITFSS (114 aa). A glycan (N-linked (GlcNAc...) asparagine) is linked at Asn-136. In terms of domain architecture, EGF-like 2; calcium-binding spans 176 to 212; the sequence is DGDDCDPNLCQNGAACTDLVNDYACTCPPGFTGRNCE. 61 disulfides stabilise this stretch: Cys-180–Cys-191, Cys-185–Cys-200, Cys-202–Cys-211, Cys-218–Cys-229, Cys-223–Cys-238, Cys-240–Cys-249, Cys-256–Cys-267, Cys-261–Cys-276, Cys-278–Cys-287, Cys-294–Cys-305, Cys-299–Cys-314, Cys-316–Cys-325, Cys-332–Cys-343, Cys-337–Cys-352, Cys-354–Cys-363, Cys-370–Cys-381, Cys-375–Cys-390, Cys-392–Cys-401, Cys-408–Cys-419, Cys-413–Cys-428, Cys-430–Cys-439, Cys-446–Cys-457, Cys-451–Cys-466, Cys-468–Cys-477, Cys-484–Cys-495, Cys-489–Cys-504, Cys-506–Cys-515, Cys-522–Cys-533, Cys-527–Cys-542, Cys-544–Cys-553, Cys-560–Cys-571, Cys-565–Cys-580, Cys-582–Cys-591, Cys-598–Cys-609, Cys-603–Cys-618, Cys-620–Cys-629, Cys-636–Cys-647, Cys-641–Cys-656, Cys-658–Cys-667, Cys-674–Cys-685, Cys-679–Cys-694, Cys-696–Cys-705, Cys-712–Cys-723, Cys-717–Cys-732, Cys-734–Cys-743, Cys-750–Cys-761, Cys-755–Cys-770, Cys-772–Cys-781, Cys-788–Cys-799, Cys-793–Cys-808, Cys-810–Cys-819, Cys-826–Cys-837, Cys-831–Cys-846, Cys-848–Cys-857, Cys-864–Cys-875, Cys-869–Cys-884, Cys-886–Cys-895, Cys-902–Cys-913, Cys-907–Cys-922, Cys-924–Cys-933, and Cys-939–Cys-1015. In terms of domain architecture, EGF-like 3; calcium-binding spans 214-250; it reads DIDECASDPCQNGGACVDGVNGYVCNCVPGFDGDECE. The 37-residue stretch at 252-288 folds into the EGF-like 4; calcium-binding domain; that stretch reads NINECASSPCLNGGICVDGVNMFECTCLAGFTGVRCE. An EGF-like 5; calcium-binding domain is found at 290-326; that stretch reads NIDECASAPCQNGGICIDGINGYTCSCPLGFSGDNCE. In terms of domain architecture, EGF-like 6; calcium-binding spans 328–364; sequence NDDECSSIPCLNGGTCVDLVNAYMCVCAPGWTGPTCA. The region spanning 366–402 is the EGF-like 7; calcium-binding domain; it reads NIDECASAPCQNGGVCIDGVNGYMCDCQPGYTGTHCE. The 37-residue stretch at 404–440 folds into the EGF-like 8; calcium-binding domain; sequence DIDECARPPCQNGGDCVDGVNGYVCICAPGFDGLNCE. Residues 442–478 form the EGF-like 9; calcium-binding domain; sequence NIDECASRPCQNGAVCVDGVNGFVCTCSAGYTGVLCE. Residues 480–516 enclose the EGF-like 10; calcium-binding domain; it reads DINECASMPCLNGGVCTDLVNGYICTCAAGFEGTNCE. Positions 518 to 554 constitute an EGF-like 11; calcium-binding domain; that stretch reads DTDECASFPCQNGATCTDQVNGYVCTCVPGYTGVLCE. Residues 556–592 form the EGF-like 12; calcium-binding domain; the sequence is DINECASFPCLNGGTCNDQVNGYVCVCAQDTSVSTCE. One can recognise an EGF-like 13; calcium-binding domain in the interval 594-630; that stretch reads DRDECASAPCLNGGACMDVVNGFVCTCLPGWEGTNCE. An EGF-like 14; calcium-binding domain is found at 632 to 668; sequence NTDECASSPCMNGGLCVDQVNSYVCFCLPGFTGIHCG. One can recognise an EGF-like 15; calcium-binding domain in the interval 670–706; that stretch reads EIDECASSPCLNGGQCIDRVDSYECVCAAGYTAVRCQ. Positions 708–744 constitute an EGF-like 16; calcium-binding domain; sequence NIDECASAPCQNGGVCVDGVNGYVCNCAPGYTGDNCE. The region spanning 746-782 is the EGF-like 17; calcium-binding domain; the sequence is EIDECASMPCLNGGACIEMVNGYTCQCVAGYTGVICE. The EGF-like 18; calcium-binding domain maps to 784 to 820; sequence DIDECASAPCQNGGVCTDTINGYICACVPGFTGSNCE. Residues 822–858 form the EGF-like 19; calcium-binding domain; sequence NIDECASDPCLNGGICVDGVNGFVCQCPPNYSGTYCE. Asn-851 carries an N-linked (GlcNAc...) asparagine glycan. One can recognise an EGF-like 20 domain in the interval 860–896; it reads SLDACRSMPCQNGATCVNVGADYVCECVPGYAGQNCE. The region spanning 898-934 is the EGF-like 21; calcium-binding domain; the sequence is DINECASLPCQNGGLCIDGIAGYTCQCRLGYIGVNCE. Residues 937 to 1056 enclose the Avidin-like domain; it reads GFCDLEGMWY…GQDKWTRYEQ (120 aa).

As to quaternary structure, homotetramer.

The protein resides in the secreted. The protein localises to the extracellular space. It is found in the cytoplasmic vesicle. Its subcellular location is the extracellular matrix. It localises to the hyaline layer. The protein resides in the apical lamina. In terms of biological role, forms the apical lamina, a component of the extracellular matrix. This is Fibropellin-1 (EGF1) from Strongylocentrotus purpuratus (Purple sea urchin).